Reading from the N-terminus, the 147-residue chain is Hemoglobin subunit gamma (147 aa).

The Globin domain maps to 3 to 147 (HFTVEEKAVI…VAIALAHKYH (145 aa)). Positions 64 and 93 each coordinate heme b.

It belongs to the globin family. In terms of assembly, heterotetramer of two alpha chains and two gamma chains in fetal hemoglobin (Hb F). In terms of tissue distribution, red blood cells.

Gamma chains make up the fetal hemoglobin F, in combination with alpha chains. This chain is Hemoglobin subunit gamma (HBG), found in Cheirogaleus medius (Fat-tailed dwarf lemur).